We begin with the raw amino-acid sequence, 599 residues long: Elongation factor 4 (599 aa).

Residues 5–187 (SHIRNFSIIA…RLVQSIPAPE (183 aa)) enclose the tr-type G domain. GTP contacts are provided by residues 17 to 22 (DHGKST) and 134 to 137 (NKMD).

It belongs to the TRAFAC class translation factor GTPase superfamily. Classic translation factor GTPase family. LepA subfamily.

The protein resides in the cell inner membrane. It catalyses the reaction GTP + H2O = GDP + phosphate + H(+). Its function is as follows. Required for accurate and efficient protein synthesis under certain stress conditions. May act as a fidelity factor of the translation reaction, by catalyzing a one-codon backward translocation of tRNAs on improperly translocated ribosomes. Back-translocation proceeds from a post-translocation (POST) complex to a pre-translocation (PRE) complex, thus giving elongation factor G a second chance to translocate the tRNAs correctly. Binds to ribosomes in a GTP-dependent manner. In Pseudomonas entomophila (strain L48), this protein is Elongation factor 4.